Here is a 367-residue protein sequence, read N- to C-terminus: UDP-N-acetylglucosamine--N-acetylmuramyl-(pentapeptide) pyrophosphoryl-undecaprenol N-acetylglucosamine transferase (367 aa).

Residues 13–15, asparagine 127, arginine 168, serine 200, isoleucine 251, and glutamine 296 contribute to the UDP-N-acetyl-alpha-D-glucosamine site; that span reads TGG.

It belongs to the glycosyltransferase 28 family. MurG subfamily.

It localises to the cell inner membrane. It carries out the reaction di-trans,octa-cis-undecaprenyl diphospho-N-acetyl-alpha-D-muramoyl-L-alanyl-D-glutamyl-meso-2,6-diaminopimeloyl-D-alanyl-D-alanine + UDP-N-acetyl-alpha-D-glucosamine = di-trans,octa-cis-undecaprenyl diphospho-[N-acetyl-alpha-D-glucosaminyl-(1-&gt;4)]-N-acetyl-alpha-D-muramoyl-L-alanyl-D-glutamyl-meso-2,6-diaminopimeloyl-D-alanyl-D-alanine + UDP + H(+). The protein operates within cell wall biogenesis; peptidoglycan biosynthesis. Cell wall formation. Catalyzes the transfer of a GlcNAc subunit on undecaprenyl-pyrophosphoryl-MurNAc-pentapeptide (lipid intermediate I) to form undecaprenyl-pyrophosphoryl-MurNAc-(pentapeptide)GlcNAc (lipid intermediate II). This is UDP-N-acetylglucosamine--N-acetylmuramyl-(pentapeptide) pyrophosphoryl-undecaprenol N-acetylglucosamine transferase from Flavobacterium psychrophilum (strain ATCC 49511 / DSM 21280 / CIP 103535 / JIP02/86).